The primary structure comprises 308 residues: Putative ankyrin repeat protein R835 (308 aa).

6 ANK repeats span residues 100–129 (DINE…NIDL), 152–181 (PMNK…YVDF), 190–217 (SEYT…GANY), 218–247 (KSSY…DLEK), 249–277 (GLRS…EIDY), and 279–305 (YYIY…SKQI).

This Acanthamoeba polyphaga (Amoeba) protein is Putative ankyrin repeat protein R835.